A 123-amino-acid chain; its full sequence is Fluoride-specific ion channel FluC (123 aa).

The next 4 membrane-spanning stretches (helical) occupy residues 7-27 (LAVAAGGALGALFRFYLSGLL), 39-59 (MVNGLASFILGYLYGLLFWGF), 68-88 (FLGTGFCGGLSTFSTFSYETF), and 101-121 (LNVAANVFVTISLVFIGFLLA). 2 residues coordinate Na(+): glycine 75 and serine 78.

This sequence belongs to the fluoride channel Fluc/FEX (TC 1.A.43) family.

The protein localises to the cell membrane. It carries out the reaction fluoride(in) = fluoride(out). With respect to regulation, na(+) is not transported, but it plays an essential structural role and its presence is essential for fluoride channel function. In terms of biological role, fluoride-specific ion channel. Important for reducing fluoride concentration in the cell, thus reducing its toxicity. In Thermococcus gammatolerans (strain DSM 15229 / JCM 11827 / EJ3), this protein is Fluoride-specific ion channel FluC.